The sequence spans 201 residues: 3-isopropylmalate dehydratase small subunit (201 aa).

It belongs to the LeuD family. LeuD type 1 subfamily. Heterodimer of LeuC and LeuD.

The enzyme catalyses (2R,3S)-3-isopropylmalate = (2S)-2-isopropylmalate. Its pathway is amino-acid biosynthesis; L-leucine biosynthesis; L-leucine from 3-methyl-2-oxobutanoate: step 2/4. In terms of biological role, catalyzes the isomerization between 2-isopropylmalate and 3-isopropylmalate, via the formation of 2-isopropylmaleate. This is 3-isopropylmalate dehydratase small subunit from Methylorubrum extorquens (strain ATCC 14718 / DSM 1338 / JCM 2805 / NCIMB 9133 / AM1) (Methylobacterium extorquens).